The primary structure comprises 285 residues: GPN-loop GTPase 3 (285 aa).

13–18 (GSGKST) provides a ligand contact to GTP. Residues 70–72 (GPN) carry the Gly-Pro-Asn (GPN)-loop; involved in dimer interface motif. Position 172-175 (172-175 (TKID)) interacts with GTP. The tract at residues 253–276 (GEDLEPKEPPLENDDDDDDDEGDE) is disordered. The span at 263–275 (LENDDDDDDDEGD) shows a compositional bias: acidic residues.

This sequence belongs to the GPN-loop GTPase family. As to quaternary structure, heterodimer with gpn1. Binds to RNA polymerase II (RNAPII).

Its function is as follows. Small GTPase required for proper localization of RNA polymerase II (RNAPII). May act at an RNAP assembly step prior to nuclear import. The chain is GPN-loop GTPase 3 (gpn3) from Dictyostelium discoideum (Social amoeba).